The chain runs to 1044 residues: Protein ITPRID1 (1044 aa).

Residues Met1–Glu14 are compositionally biased toward polar residues. Disordered stretches follow at residues Met1–Lys20, Glu230–Arg251, Met388–Glu489, and Pro583–Asp607. The segment covering Met388 to Thr398 has biased composition (acidic residues). Composition is skewed to polar residues over residues His460 to Gln469 and Arg480 to Glu489. Residues Ser896–Glu937 are a coiled coil.

The polypeptide is Protein ITPRID1 (Homo sapiens (Human)).